A 609-amino-acid polypeptide reads, in one-letter code: Elongation factor 4 (609 aa).

Positions 11–193 (SRIRNFSIIA…QIVEKVPAPS (183 aa)) constitute a tr-type G domain. GTP contacts are provided by residues 23 to 28 (DHGKST) and 140 to 143 (NKID).

This sequence belongs to the TRAFAC class translation factor GTPase superfamily. Classic translation factor GTPase family. LepA subfamily.

It is found in the cell membrane. It carries out the reaction GTP + H2O = GDP + phosphate + H(+). Required for accurate and efficient protein synthesis under certain stress conditions. May act as a fidelity factor of the translation reaction, by catalyzing a one-codon backward translocation of tRNAs on improperly translocated ribosomes. Back-translocation proceeds from a post-translocation (POST) complex to a pre-translocation (PRE) complex, thus giving elongation factor G a second chance to translocate the tRNAs correctly. Binds to ribosomes in a GTP-dependent manner. The sequence is that of Elongation factor 4 from Halalkalibacterium halodurans (strain ATCC BAA-125 / DSM 18197 / FERM 7344 / JCM 9153 / C-125) (Bacillus halodurans).